Consider the following 711-residue polypeptide: Protein mono-ADP-ribosyltransferase PARP12 (711 aa).

3 C3H1-type zinc fingers span residues Leu103–Lys128, Ile164–His188, and Ile189–Thr211. The interval Ser247–Gln279 is disordered. At Ser268 the chain carries Phosphoserine. C3H1-type zinc fingers lie at residues Glu280 to Leu307 and Glu281 to His306. WWE domains follow at residues Pro308–Thr371 and Ser374–Arg468. Cys484 carries the ADP-ribosylcysteine modification. The PARP catalytic domain maps to Ile494 to Thr708. 2 positions are modified to ADP-ribosyl aspartic acid: Asp610 and Asp621.

This sequence belongs to the ARTD/PARP family. As to quaternary structure, interacts with PARP11; this interaction plays a key role in zika virus suppression. Interacts with ISG15. Post-translationally, auto-mono-ADP-ribosylated. Phosphorylated by PRKD1.

It is found in the nucleus. The protein localises to the golgi apparatus. It localises to the trans-Golgi network. The protein resides in the cytoplasm. Its subcellular location is the stress granule. It carries out the reaction L-aspartyl-[protein] + NAD(+) = 4-O-(ADP-D-ribosyl)-L-aspartyl-[protein] + nicotinamide. It catalyses the reaction L-cysteinyl-[protein] + NAD(+) = S-(ADP-D-ribosyl)-L-cysteinyl-[protein] + nicotinamide + H(+). Functionally, mono-ADP-ribosyltransferase that mediates mono-ADP-ribosylation of target proteins. Displays anti-alphavirus activity during IFN-gamma immune activation by directly ADP-ribosylating the alphaviral non-structural proteins nsP3 and nsP4. Acts as a component of the PRKD1-driven regulatory cascade that selectively controls a major branch of the basolateral transport pathway by catalyzing the MARylation of GOLGA1. Acts also as a key regulator of mitochondrial function, protein translation, and inflammation. Inhibits PINK1/Parkin-dependent mitophagy and promotes cartilage degeneration by inhibiting the ubiquitination and SUMOylation of MFN1/2 by upregulating ISG15 and ISGylation. This chain is Protein mono-ADP-ribosyltransferase PARP12, found in Mus musculus (Mouse).